The sequence spans 198 residues: Recombination protein RecR (198 aa).

The C4-type zinc-finger motif lies at 58–73 (CSTCGNFTDTDPCALC). Positions 81–175 (STICVVEQPK…KVTRIAAGIP (95 aa)) constitute a Toprim domain.

This sequence belongs to the RecR family.

May play a role in DNA repair. It seems to be involved in an RecBC-independent recombinational process of DNA repair. It may act with RecF and RecO. The protein is Recombination protein RecR of Clostridium botulinum (strain Alaska E43 / Type E3).